We begin with the raw amino-acid sequence, 41 residues long: Large ribosomal subunit protein bL36 (41 aa).

It belongs to the bacterial ribosomal protein bL36 family.

In Sinorhizobium medicae (strain WSM419) (Ensifer medicae), this protein is Large ribosomal subunit protein bL36.